We begin with the raw amino-acid sequence, 397 residues long: MHKIMAINAGSSSLKFQIFTMPGEEVLVKGLIERIGLPDAIFNMSFQNEKIKETRAINDHGKAVEILLEQLKAHQVINDLSEITGVGHRVAHGGEDFVTSCVVTDEVVKGIEAVTNLAPLHNPANIIGIKTFRELLPNAVSVAVFDTAFHQTIPQENFLYALPYELYEKHHIRKYGFHGTSHKYVAGKAAEVLEKPLEKLKIISCHLGNGASVCAIEAGKSVNTSMGFTPNAGLMMGTRSGTIDATIIPYLVDELGYSLDEVMHMMSNESGVLGVSGISSDFRDIEIAAKEGNSRALLTLRMFTGQICNYIGAYASAMNGCDALLFTAGVGENSPLIRQMVTEQLSYLGVTCHVTKNNAGDMIISNDNEAVKVCIIPTNEELMIARDVEKYAKQTIG.

Residue N8 coordinates Mg(2+). K15 is a binding site for ATP. Substrate is bound at residue R89. Residue D146 is the Proton donor/acceptor of the active site. ATP contacts are provided by residues 206-210 (HLGNG), 281-283 (DFR), and 329-333 (GVGEN). Residue E380 participates in Mg(2+) binding.

It belongs to the acetokinase family. Homodimer. Requires Mg(2+) as cofactor. Mn(2+) serves as cofactor.

It is found in the cytoplasm. The enzyme catalyses acetate + ATP = acetyl phosphate + ADP. It participates in metabolic intermediate biosynthesis; acetyl-CoA biosynthesis; acetyl-CoA from acetate: step 1/2. Catalyzes the formation of acetyl phosphate from acetate and ATP. Can also catalyze the reverse reaction. In Listeria monocytogenes serovar 1/2a (strain ATCC BAA-679 / EGD-e), this protein is Acetate kinase 2.